Reading from the N-terminus, the 300-residue chain is Type II methyltransferase M.XycI (300 aa).

Positions 109 to 129 (RGYRAPDKKNPARAMDVRPDT) are disordered. The span at 112 to 127 (RAPDKKNPARAMDVRP) shows a compositional bias: basic and acidic residues.

The protein belongs to the N(4)/N(6)-methyltransferase family. N(4) subfamily.

The enzyme catalyses a 2'-deoxycytidine in DNA + S-adenosyl-L-methionine = an N(4)-methyl-2'-deoxycytidine in DNA + S-adenosyl-L-homocysteine + H(+). A beta subtype methylase, recognizes the double-stranded sequence 5'-CCCGGG-3', methylates C-2 on both strands, and protects the DNA from cleavage by the XcyI endonuclease. The chain is Type II methyltransferase M.XycI (xcyIM) from Xanthomonas campestris pv. cyanopsidis.